A 544-amino-acid polypeptide reads, in one-letter code: NEDD4-binding protein 3 (544 aa).

Disordered regions lie at residues 61-84 (LPKK…ADYA), 116-252 (SVFK…EFSC), 335-365 (KELR…PEEE), and 430-465 (QEQA…RDSA). Phosphoserine is present on Ser-176. Residues 186-222 (PSLSDSSSGGSFGRSPGTGPSPFSSSLGHLNHLGGSL) show a composition bias toward low complexity. Positions 294-530 (LAELKRLYVE…LEQELRALRE (237 aa)) form a coiled coil.

The protein belongs to the N4BP3 family. As to quaternary structure, binds NEDD4. Interacts with 14-3-3 proteins. Interacts with MAVS.

The protein localises to the cytoplasmic vesicle. The protein resides in the cell projection. It is found in the axon. It localises to the dendrite. Plays a positive role in the antiviral innate immune signaling pathway. Mechanistically, interacts with MAVS and functions as a positive regulator to promote 'Lys-63'-linked polyubiquitination of MAVS and thus strengthens the interaction between MAVS and TRAF2. Also plays a role in axon and dendrite arborization during cranial nerve development. May also be important for neural crest migration and early development of other anterior structures including eye, brain and cranial cartilage. The chain is NEDD4-binding protein 3 (N4BP3) from Homo sapiens (Human).